The sequence spans 123 residues: Small ribosomal subunit protein uS12 (123 aa).

Residues methionine 1–arginine 22 form a disordered region. Aspartate 89 is subject to 3-methylthioaspartic acid. Residues alanine 101 to lysine 123 are disordered. The segment covering lysine 111–lysine 123 has biased composition (basic residues).

It belongs to the universal ribosomal protein uS12 family. As to quaternary structure, part of the 30S ribosomal subunit. Contacts proteins S8 and S17. May interact with IF1 in the 30S initiation complex.

Its function is as follows. With S4 and S5 plays an important role in translational accuracy. In terms of biological role, interacts with and stabilizes bases of the 16S rRNA that are involved in tRNA selection in the A site and with the mRNA backbone. Located at the interface of the 30S and 50S subunits, it traverses the body of the 30S subunit contacting proteins on the other side and probably holding the rRNA structure together. The combined cluster of proteins S8, S12 and S17 appears to hold together the shoulder and platform of the 30S subunit. The protein is Small ribosomal subunit protein uS12 of Teredinibacter turnerae (strain ATCC 39867 / T7901).